The primary structure comprises 425 residues: Bifunctional phosphoribosylaminoimidazole carboxylase/phosphoribosylaminoimidazole succinocarboxamide synthetase (425 aa).

N-acetylalanine is present on A2. An SAICAR synthetase domain region spans residues 2–260; the sequence is ATAEVLNIGK…WVAERVELLL (259 aa). Phosphotyrosine is present on Y22. Phosphoserine is present on S27. At K36 the chain carries N6-acetyllysine. Position 107 is a phosphoserine (S107). Residue T238 is modified to Phosphothreonine. K247 is modified (N6-acetyllysine). A linker region spans residues 261-266; it reads KSESQC. An AIR carboxylase domain region spans residues 267-425; that stretch reads RVVVLMGSTS…ADKKIRECNL (159 aa). Phosphoserine is present on S274. S332 is a binding site for CO2.

In the N-terminal section; belongs to the SAICAR synthetase family. This sequence in the C-terminal section; belongs to the AIR carboxylase family. Class II subfamily. Homooctamer.

It carries out the reaction 5-amino-1-(5-phospho-D-ribosyl)imidazole-4-carboxylate + L-aspartate + ATP = (2S)-2-[5-amino-1-(5-phospho-beta-D-ribosyl)imidazole-4-carboxamido]succinate + ADP + phosphate + 2 H(+). It catalyses the reaction 5-amino-1-(5-phospho-D-ribosyl)imidazole-4-carboxylate + H(+) = 5-amino-1-(5-phospho-beta-D-ribosyl)imidazole + CO2. The protein operates within purine metabolism; IMP biosynthesis via de novo pathway; 5-amino-1-(5-phospho-D-ribosyl)imidazole-4-carboxamide from 5-amino-1-(5-phospho-D-ribosyl)imidazole-4-carboxylate: step 1/2. It participates in purine metabolism; IMP biosynthesis via de novo pathway; 5-amino-1-(5-phospho-D-ribosyl)imidazole-4-carboxylate from 5-amino-1-(5-phospho-D-ribosyl)imidazole (carboxylase route): step 1/1. Its function is as follows. Bifunctional phosphoribosylaminoimidazole carboxylase and phosphoribosylaminoimidazole succinocarboxamide synthetase catalyzing two reactions of the de novo purine biosynthetic pathway. This chain is Bifunctional phosphoribosylaminoimidazole carboxylase/phosphoribosylaminoimidazole succinocarboxamide synthetase, found in Homo sapiens (Human).